We begin with the raw amino-acid sequence, 690 residues long: uncharacterized protein (690 aa).

This is an uncharacterized protein from Acanthamoeba polyphaga (Amoeba).